A 284-amino-acid chain; its full sequence is Homeobox protein SIX1 (284 aa).

Positions 124–183 (GEETSYCFKEKSRGVLREWYAHNPYPSPREKRELAEATGLTTTQVSNWFKNRRQRDRAAE) form a DNA-binding region, homeobox. Residues 168 to 271 (VSNWFKNRRQ…AHQHQLQDSL (104 aa)) form a disordered region. A compositionally biased stretch (basic and acidic residues) spans 179 to 190 (DRAAEAKERENT). Residues 242-271 (RSSNYSLPGLTASQPSHGLQAHQHQLQDSL) show a composition bias toward polar residues.

The protein belongs to the SIX/Sine oculis homeobox family. As to quaternary structure, interacts with DACH1. Interacts with EYA1. Interacts with EYA2. Interacts with CDH1. Interacts with TBX18. Interacts with CEBPA. Interacts with CEBPB. Interacts with EBF2. Phosphorylated during interphase; becomes hyperphosphorylated during mitosis. Hyperphosphorylation impairs binding to promoter elements. In terms of processing, ubiquitinated by the anaphase promoting complex (APC), leading to its proteasomal degradation.

The protein localises to the nucleus. The protein resides in the cytoplasm. Functionally, transcription factor that is involved in the regulation of cell proliferation, apoptosis and embryonic development. Plays an important role in the development of several organs, including kidney, muscle and inner ear. Depending on context, functions as a transcriptional repressor or activator. Lacks an activation domain, and requires interaction with EYA family members for transcription activation. Mediates nuclear translocation of EYA1 and EYA2. Binds the 5'-TCA[AG][AG]TTNC-3' motif present in the MEF3 element in the MYOG promoter and CIDEA enhancer. Regulates the expression of numerous genes, including MYC, CCNA1, CCND1 and EZR. Acts as an activator of the IGFBP5 promoter, probably coactivated by EYA2. Repression of precursor cell proliferation in myoblasts is switched to activation through recruitment of EYA3 to the SIX1-DACH1 complex. During myogenesis, seems to act together with EYA2 and DACH2. Regulates the expression of CCNA1. Promotes brown adipocyte differentiation. This is Homeobox protein SIX1 (SIX1) from Lagothrix lagotricha (Brown woolly monkey).